The following is a 193-amino-acid chain: p53 apoptosis effector related to PMP-22 (193 aa).

Helical transmembrane passes span 12–32 (RWIL…ALAG), 79–99 (AMLF…FFAL), 110–130 (VIGG…VIYP), and 151–171 (WAYG…FFFC).

Belongs to the TMEM47 family. In terms of assembly, (Microbial infection) Interacts with S.typhimurium sipA and sctB1/sipC. As to expression, expressed in skin, heart, placental, liver, pancreas, keratinocytes and dermal fibroblasts. May translocate to the intestinal apical epithelial cell surface via sipA and sctB1/sipC-promoted exocytic translocation following infection by S. Typhimurium.

It localises to the cell junction. The protein localises to the desmosome. The protein resides in the cell membrane. It is found in the cytoplasm. In terms of biological role, component of intercellular desmosome junctions. Plays a role in stratified epithelial integrity and cell-cell adhesion by promoting desmosome assembly. Thereby plays a role in barrier function of the skin against infection. Plays a role in mammary epithelial tissue homeostasis and remodeling during and after pregnancy, potentially via its involvement in desmosome cell-cell junctions. Required for tooth enamel development via facilitating desmosome-mediated ameloblast adhesion to the stratum intermedium during the transitional stage of amelogenesis. May also play a role in downstream transcriptional regulation of other genes involved in amelogenesis such as AMBN, ENAM, MMP20 and KLK4. Plays a role as an effector in the TP53-dependent apoptotic pathway. Positively regulates apoptosis in T-helper 17 (Th17) cell populations via caspase-dependent signaling. Promotes neutrophil transepithelial migration in response to chemoattractants such as hepoxilin A3 (HXA3), N-Formylmethionyl-leucyl-phenylalanine (fMLP) and CXCL8/IL-8. Required for neutrophil transepithelial migration in response to S.typhimurium infection. May act as a positive regulator of endothelial cell apoptosis in response to blood flow-derived shear stress. The chain is p53 apoptosis effector related to PMP-22 from Homo sapiens (Human).